Consider the following 403-residue polypeptide: MSSSDAGLEEGPELSITLTLRMLMHGKEVGSIIGKKGETVKRIREQSSARITISEGSCPERITTITGSTAAVFHAVSMIAFKLDEDLCAAPANGGSVSRPPVTLRLVIPASQCGSLIGKAGTKIKEIRETTGAQVQVAGDLLPNSTERAVTVSGVPDAIILCVRQICAVILESPPKGATIPYHPSLSLGTVLLSANQGFSVQGQYGAVTPAEVTKLQQLSGHAVPFASPSVVPGMDPSTQTSSQEFLVPNDLIGCVIGRQGSKISEIRQMSGAHIKIGNQAEGAGERHVTITGSPVSIALAQYLITACLETAKSTSGGTPGSAPADLPTPFSPPLTALPTAPPGLLGTPYAISLSNFIGLKPVPFLALPPASPGPPPGLAAYTAKMAAANGSKKAERQKFSPY.

KH domains are found at residues 17-67 (TLTL…TITG), 101-154 (PVTL…TVSG), and 241-293 (TSSQ…TITG).

Widely expressed, with highest levels in testis and lowest in heart.

The protein localises to the cytoplasm. Functionally, single-stranded nucleic acid binding protein that binds preferentially to oligo dC. The chain is Poly(rC)-binding protein 4 (Pcbp4) from Mus musculus (Mouse).